We begin with the raw amino-acid sequence, 236 residues long: UPF0257 lipoprotein YnfC (236 aa).

Positions 1-16 are cleaved as a signal peptide; that stretch reads MKKPLLLTLLCMILAG. C17 is lipidated: N-palmitoyl cysteine. A lipid anchor (S-diacylglycerol cysteine) is attached at C17.

It belongs to the UPF0257 family.

The protein resides in the cell membrane. The polypeptide is UPF0257 lipoprotein YnfC (Salmonella heidelberg (strain SL476)).